The primary structure comprises 490 residues: Betaine aldehyde dehydrogenase (490 aa).

K(+) contacts are provided by T26, I27, and D93. 150-152 (GAW) contributes to the NAD(+) binding site. K162 serves as the catalytic Charge relay system. 176–179 (KPSE) contributes to the NAD(+) binding site. Position 180 (V180) interacts with K(+). 230 to 233 (GVAS) contributes to the NAD(+) binding site. L246 provides a ligand contact to K(+). The active-site Proton acceptor is E252. G254, C286, and E387 together coordinate NAD(+). Residue C286 is the Nucleophile of the active site. C286 is subject to Cysteine sulfenic acid (-SOH). Residues K457 and G460 each coordinate K(+). Catalysis depends on E464, which acts as the Charge relay system.

The protein belongs to the aldehyde dehydrogenase family. In terms of assembly, dimer of dimers. It depends on K(+) as a cofactor.

The enzyme catalyses betaine aldehyde + NAD(+) + H2O = glycine betaine + NADH + 2 H(+). It functions in the pathway amine and polyamine biosynthesis; betaine biosynthesis via choline pathway; betaine from betaine aldehyde: step 1/1. In terms of biological role, involved in the biosynthesis of the osmoprotectant glycine betaine. Catalyzes the irreversible oxidation of betaine aldehyde to the corresponding acid. The polypeptide is Betaine aldehyde dehydrogenase (Escherichia coli O157:H7).